A 130-amino-acid chain; its full sequence is Early 3 receptor internalization and degradation beta protein (130 aa).

A signal peptide spans M1 to C19. The helical transmembrane segment at A53–L77 threads the bilayer. The segment at Y122–L125 is tyrosine-based sorting motif.

The protein belongs to the adenoviridae E3_RID-beta family. In terms of assembly, interacts with E3 RID-alpha and E3 CR1-alpha. Phosphorylated on serine. Post-translationally, O-glycosylated, but not N-glycosylated.

It localises to the host membrane. Prevents infected cell apoptosis induced by the host immune system. Acts by down-regulating a number of cell surface receptors in the tumor necrosis factor (TNF) receptor superfamily, namely FAS, TNFRSF10A/TRAIL receptor 1, and TNFRSF10B/TRAIL receptor 2. Down-regulation of these death receptors protects adenovirus-infected cells from apoptosis induced by the death receptor ligands Fas ligand and TRAIL. RID complex also down-regulates certain tyrosine kinase cell surface receptors, especially the epidermal growth factor receptor (EGFR). RID-mediated Fas and EGFR down-regulation occurs via endocytosis of the receptors into endosomes followed by transport to and degradation within lysosomes. The protein is Early 3 receptor internalization and degradation beta protein of Human adenovirus C serotype 2 (HAdV-2).